We begin with the raw amino-acid sequence, 374 residues long: Alanine racemase (374 aa).

Residue Lys34 is the Proton acceptor; specific for D-alanine of the active site. At Lys34 the chain carries N6-(pyridoxal phosphate)lysine. Arg138 serves as a coordination point for substrate. Tyr265 serves as the catalytic Proton acceptor; specific for L-alanine. Met313 is a binding site for substrate.

Belongs to the alanine racemase family. The cofactor is pyridoxal 5'-phosphate.

The enzyme catalyses L-alanine = D-alanine. The protein operates within amino-acid biosynthesis; D-alanine biosynthesis; D-alanine from L-alanine: step 1/1. In terms of biological role, catalyzes the interconversion of L-alanine and D-alanine. May also act on other amino acids. The sequence is that of Alanine racemase (alr) from Hahella chejuensis (strain KCTC 2396).